The sequence spans 696 residues: D-(-)-3-hydroxybutyrate oligomer hydrolase (696 aa).

A signal peptide spans 1–20 (MTRLGWGRRMVFGAALAAVA). Ser-309 functions as the Charge relay system in the catalytic mechanism.

The protein belongs to the D-(-)-3-hydroxybutyrate oligomer hydrolase family.

The protein resides in the secreted. The enzyme catalyses (3R)-hydroxybutanoate dimer + H2O = 2 (R)-3-hydroxybutanoate + H(+). It functions in the pathway lipid metabolism; butanoate metabolism. Participates in the degradation of poly-3-hydroxybutyrate (PHB). It works downstream of poly(3-hydroxybutyrate) depolymerase, hydrolyzing D(-)-3-hydroxybutyrate oligomers of various length (3HB-oligomers) into 3HB-monomers. This Burkholderia lata (strain ATCC 17760 / DSM 23089 / LMG 22485 / NCIMB 9086 / R18194 / 383) protein is D-(-)-3-hydroxybutyrate oligomer hydrolase.